The chain runs to 231 residues: NADH-ubiquinone oxidoreductase chain 4 (231 aa).

6 helical membrane-spanning segments follow: residues 1 to 21 (PIAG…YGII), 34 to 54 (MFLP…LTCL), 63 to 85 (IAYS…TPWG), 89 to 111 (AMAL…NTTY), 118 to 138 (ILIL…WWLL), and 169 to 189 (TIIL…HMFL).

This sequence belongs to the complex I subunit 4 family.

It is found in the mitochondrion membrane. It catalyses the reaction a ubiquinone + NADH + 5 H(+)(in) = a ubiquinol + NAD(+) + 4 H(+)(out). In terms of biological role, core subunit of the mitochondrial membrane respiratory chain NADH dehydrogenase (Complex I) that is believed to belong to the minimal assembly required for catalysis. Complex I functions in the transfer of electrons from NADH to the respiratory chain. The immediate electron acceptor for the enzyme is believed to be ubiquinone. This is NADH-ubiquinone oxidoreductase chain 4 (MT-ND4) from Trimeresurus cantori (Cantor's pit viper).